The following is a 230-amino-acid chain: Heptaprenylglyceryl phosphate synthase (230 aa).

Lysine 12 provides a ligand contact to sn-glycerol 1-phosphate. Mg(2+)-binding residues include aspartate 14 and threonine 40. Sn-glycerol 1-phosphate contacts are provided by residues 159 to 164 (YIEYSG), glycine 189, and 209 to 210 (GD).

It belongs to the GGGP/HepGP synthase family. Group I subfamily. Homodimer. The cofactor is Mg(2+).

It carries out the reaction sn-glycerol 1-phosphate + all-trans-heptaprenyl diphosphate = 3-heptaprenyl-sn-glycero-1-phosphate + diphosphate. It functions in the pathway membrane lipid metabolism; glycerophospholipid metabolism. In terms of biological role, prenyltransferase that catalyzes in vivo the transfer of the heptaprenyl moiety of heptaprenyl pyrophosphate (HepPP; 35 carbon atoms) to the C3 hydroxyl of sn-glycerol-1-phosphate (G1P), producing heptaprenylglyceryl phosphate (HepGP). This reaction is an ether-bond-formation step in the biosynthesis of archaea-type G1P-based membrane lipids found in Bacillales. The chain is Heptaprenylglyceryl phosphate synthase from Staphylococcus aureus (strain Mu3 / ATCC 700698).